A 226-amino-acid chain; its full sequence is Histone H2B.v1 (226 aa).

The segment at phenylalanine 100–serine 130 is disordered. A compositionally biased stretch (low complexity) spans lysine 114–serine 123.

Belongs to the histone H2B family.

The polypeptide is Histone H2B.v1 (H2Bv1) (Dictyostelium discoideum (Social amoeba)).